The chain runs to 351 residues: UDP-N-acetylglucosamine--N-acetylmuramyl-(pentapeptide) pyrophosphoryl-undecaprenol N-acetylglucosamine transferase (351 aa).

Residues 13–15 (TGG), Asn-125, Arg-161, Ser-189, Ile-241, 260–265 (ALTVCE), and Gln-285 each bind UDP-N-acetyl-alpha-D-glucosamine.

Belongs to the glycosyltransferase 28 family. MurG subfamily.

It is found in the cell inner membrane. The enzyme catalyses di-trans,octa-cis-undecaprenyl diphospho-N-acetyl-alpha-D-muramoyl-L-alanyl-D-glutamyl-meso-2,6-diaminopimeloyl-D-alanyl-D-alanine + UDP-N-acetyl-alpha-D-glucosamine = di-trans,octa-cis-undecaprenyl diphospho-[N-acetyl-alpha-D-glucosaminyl-(1-&gt;4)]-N-acetyl-alpha-D-muramoyl-L-alanyl-D-glutamyl-meso-2,6-diaminopimeloyl-D-alanyl-D-alanine + UDP + H(+). It functions in the pathway cell wall biogenesis; peptidoglycan biosynthesis. Cell wall formation. Catalyzes the transfer of a GlcNAc subunit on undecaprenyl-pyrophosphoryl-MurNAc-pentapeptide (lipid intermediate I) to form undecaprenyl-pyrophosphoryl-MurNAc-(pentapeptide)GlcNAc (lipid intermediate II). In Haemophilus influenzae (strain ATCC 51907 / DSM 11121 / KW20 / Rd), this protein is UDP-N-acetylglucosamine--N-acetylmuramyl-(pentapeptide) pyrophosphoryl-undecaprenol N-acetylglucosamine transferase.